A 231-amino-acid polypeptide reads, in one-letter code: 2-C-methyl-D-erythritol 4-phosphate cytidylyltransferase (231 aa).

It belongs to the IspD/TarI cytidylyltransferase family. IspD subfamily.

It carries out the reaction 2-C-methyl-D-erythritol 4-phosphate + CTP + H(+) = 4-CDP-2-C-methyl-D-erythritol + diphosphate. Its pathway is isoprenoid biosynthesis; isopentenyl diphosphate biosynthesis via DXP pathway; isopentenyl diphosphate from 1-deoxy-D-xylulose 5-phosphate: step 2/6. Functionally, catalyzes the formation of 4-diphosphocytidyl-2-C-methyl-D-erythritol from CTP and 2-C-methyl-D-erythritol 4-phosphate (MEP). The chain is 2-C-methyl-D-erythritol 4-phosphate cytidylyltransferase from Clostridium kluyveri (strain NBRC 12016).